A 66-amino-acid chain; its full sequence is UPF0434 protein Nwi_0075 (66 aa).

It belongs to the UPF0434 family.

The polypeptide is UPF0434 protein Nwi_0075 (Nitrobacter winogradskyi (strain ATCC 25391 / DSM 10237 / CIP 104748 / NCIMB 11846 / Nb-255)).